We begin with the raw amino-acid sequence, 94 residues long: Small ribosomal subunit protein uS19 (94 aa).

It belongs to the universal ribosomal protein uS19 family.

In terms of biological role, protein S19 forms a complex with S13 that binds strongly to the 16S ribosomal RNA. The protein is Small ribosomal subunit protein uS19 of Clostridium botulinum (strain Hall / ATCC 3502 / NCTC 13319 / Type A).